Consider the following 64-residue polypeptide: Large ribosomal subunit protein bL35 (64 aa).

The segment covering 1 to 22 (MPKMKSHTGMGKRVRVTGKGKI) has biased composition (basic residues). The tract at residues 1–39 (MPKMKSHTGMGKRVRVTGKGKIVKQQAGLRHNLEKKPST) is disordered.

It belongs to the bacterial ribosomal protein bL35 family.

The chain is Large ribosomal subunit protein bL35 from Salinispora arenicola (strain CNS-205).